An 81-amino-acid polypeptide reads, in one-letter code: Small ribosomal subunit protein bS18 (81 aa).

Belongs to the bacterial ribosomal protein bS18 family. Part of the 30S ribosomal subunit. Forms a tight heterodimer with protein bS6.

Functionally, binds as a heterodimer with protein bS6 to the central domain of the 16S rRNA, where it helps stabilize the platform of the 30S subunit. This Rubrobacter xylanophilus (strain DSM 9941 / JCM 11954 / NBRC 16129 / PRD-1) protein is Small ribosomal subunit protein bS18.